Consider the following 324-residue polypeptide: Beta-ketoacyl-[acyl-carrier-protein] synthase III (324 aa).

Residues Cys112 and His249 contribute to the active site. The ACP-binding stretch occupies residues 250–254 (QANDR). Residue Asn279 is part of the active site.

This sequence belongs to the thiolase-like superfamily. FabH family. Homodimer.

It localises to the cytoplasm. The catalysed reaction is malonyl-[ACP] + acetyl-CoA + H(+) = 3-oxobutanoyl-[ACP] + CO2 + CoA. It participates in lipid metabolism; fatty acid biosynthesis. Catalyzes the condensation reaction of fatty acid synthesis by the addition to an acyl acceptor of two carbons from malonyl-ACP. Catalyzes the first condensation reaction which initiates fatty acid synthesis and may therefore play a role in governing the total rate of fatty acid production. Possesses both acetoacetyl-ACP synthase and acetyl transacylase activities. Its substrate specificity determines the biosynthesis of branched-chain and/or straight-chain of fatty acids. This Streptococcus pneumoniae serotype 19F (strain G54) protein is Beta-ketoacyl-[acyl-carrier-protein] synthase III.